We begin with the raw amino-acid sequence, 212 residues long: Uracil phosphoribosyltransferase (212 aa).

5-phospho-alpha-D-ribose 1-diphosphate is bound by residues Arg78, Arg103, and Asp130 to Ser138. Uracil-binding positions include Ile193 and Gly198–Ala200. A 5-phospho-alpha-D-ribose 1-diphosphate-binding site is contributed by Asp199.

Belongs to the UPRTase family. Mg(2+) serves as cofactor.

The catalysed reaction is UMP + diphosphate = 5-phospho-alpha-D-ribose 1-diphosphate + uracil. It functions in the pathway pyrimidine metabolism; UMP biosynthesis via salvage pathway; UMP from uracil: step 1/1. With respect to regulation, allosterically activated by GTP. Functionally, catalyzes the conversion of uracil and 5-phospho-alpha-D-ribose 1-diphosphate (PRPP) to UMP and diphosphate. This is Uracil phosphoribosyltransferase from Pseudomonas savastanoi pv. phaseolicola (strain 1448A / Race 6) (Pseudomonas syringae pv. phaseolicola (strain 1448A / Race 6)).